Here is a 120-residue protein sequence, read N- to C-terminus: PYEKIGAELVKEVAKKTDDVAGDGTTTATVLAQALVREGLRNVAAGANPLGLKRGIEKAVEAVTQSLLKSAKEVETKEQISATAAISAGDTQIGELIAEAMDKVGNEGVITVEESNTFGL.

23–27 contributes to the ATP binding site; it reads DGTTT.

Belongs to the chaperonin (HSP60) family. In terms of assembly, forms a cylinder of 14 subunits composed of two heptameric rings stacked back-to-back. Interacts with the co-chaperonin GroES.

The protein resides in the cytoplasm. The catalysed reaction is ATP + H2O + a folded polypeptide = ADP + phosphate + an unfolded polypeptide.. Its function is as follows. Together with its co-chaperonin GroES, plays an essential role in assisting protein folding. The GroEL-GroES system forms a nano-cage that allows encapsulation of the non-native substrate proteins and provides a physical environment optimized to promote and accelerate protein folding. This is Chaperonin GroEL from Mycolicibacterium vaccae (Mycobacterium vaccae).